The chain runs to 316 residues: tRNA dimethylallyltransferase (316 aa).

13-20 contacts ATP; sequence GPTAVGKT. 15–20 provides a ligand contact to substrate; sequence TAVGKT. The segment at 38-41 is interaction with substrate tRNA; it reads DSIQ.

Belongs to the IPP transferase family. As to quaternary structure, monomer. Mg(2+) is required as a cofactor.

The catalysed reaction is adenosine(37) in tRNA + dimethylallyl diphosphate = N(6)-dimethylallyladenosine(37) in tRNA + diphosphate. Catalyzes the transfer of a dimethylallyl group onto the adenine at position 37 in tRNAs that read codons beginning with uridine, leading to the formation of N6-(dimethylallyl)adenosine (i(6)A). This chain is tRNA dimethylallyltransferase, found in Staphylococcus carnosus (strain TM300).